The primary structure comprises 331 residues: PTS-dependent dihydroxyacetone kinase 2, dihydroxyacetone-binding subunit DhaK (331 aa).

The DhaK domain maps to 7–328; sequence DGYEAVEEML…LDTPCDTPYF (322 aa). Dihydroxyacetone contacts are provided by residues 55 to 58 and D111; that span reads GSGH. H58 serves as the catalytic Proton acceptor. Catalysis depends on H218, which acts as the Tele-hemiaminal-histidine intermediate.

As to quaternary structure, homodimer. The dihydroxyacetone kinase complex is composed of a homodimer of DhaM, a homodimer of DhaK and the subunit DhaL.

It is found in the cytoplasm. It catalyses the reaction dihydroxyacetone + phosphoenolpyruvate = dihydroxyacetone phosphate + pyruvate. Its pathway is polyol metabolism; glycerol degradation. Functionally, dihydroxyacetone binding subunit of the dihydroxyacetone kinase, which is responsible for the phosphoenolpyruvate (PEP)-dependent phosphorylation of dihydroxyacetone via a phosphoryl group transfer from DhaL-ATP. The protein is PTS-dependent dihydroxyacetone kinase 2, dihydroxyacetone-binding subunit DhaK of Listeria innocua serovar 6a (strain ATCC BAA-680 / CLIP 11262).